Consider the following 296-residue polypeptide: Prostate androgen-regulated mucin-like protein 1 homolog (296 aa).

Positions 1–20 are cleaved as a signal peptide; that stretch reads MVCKVLIALCIFTAGLRVQG. Residues 21 to 244 are Extracellular-facing; sequence SPTVPLPVSL…EVENALSSGS (224 aa). N-linked (GlcNAc...) asparagine glycans are attached at residues N61 and N95. The segment at 72-220 is disordered; sequence LTSQLPTDHR…SPQDTEPGKV (149 aa). Basic and acidic residues predominate over residues 78–95; that stretch reads TDHREEAVTSPPLKRDVN. Residues 96–110 show a composition bias toward polar residues; it reads STDSSPAGFPSTSSD. The segment covering 139–167 has biased composition (low complexity); that stretch reads LLSSQAPTSATTSPATSLSESLSASVTSS. Residues 168–177 show a composition bias toward polar residues; it reads HNSTVANIQP. N-linked (GlcNAc...) asparagine glycosylation is present at N169. Basic and acidic residues predominate over residues 206–217; the sequence is VPKEKSPQDTEP. A helical transmembrane segment spans residues 245 to 265; that stretch reads IAAITVTVIAVVLLVFGGAAY. The Cytoplasmic segment spans residues 266–296; sequence LKIRHSSYGRLLDDHDYGSWGNYNNPLYDDS. Phosphoserine is present on S284.

It belongs to the PARM family. In terms of processing, highly N-glycosylated and O-glycosylated.

It is found in the cell membrane. The protein localises to the golgi apparatus membrane. Its subcellular location is the endosome membrane. Its function is as follows. May regulate TLP1 expression and telomerase activity, thus enabling certain prostatic cells to resist apoptosis. The sequence is that of Prostate androgen-regulated mucin-like protein 1 homolog (Parm1) from Mus musculus (Mouse).